The sequence spans 188 residues: Insulin-like growth factor 1 (188 aa).

Residues 45-73 (GPETLCGAELVDTLQFVCGERGFYFSKPT) form a b region. Cystine bridges form between cysteine 50–cysteine 92, cysteine 62–cysteine 105, and cysteine 91–cysteine 96. The tract at residues 74–85 (GYGPSSRRSHNR) is c. The interval 86–106 (GIVDECCFQSCELRRLEMYCA) is a. The segment at 107-114 (PVKSGKAA) is d. A propeptide spans 115–188 (RSVRAQRHTD…GNTGGRNYRM (74 aa)) (e peptide). The segment at 115-188 (RSVRAQRHTD…GNTGGRNYRM (74 aa)) is disordered. Positions 140-153 (RGTERRTAQHPDKT) are enriched in basic and acidic residues.

Belongs to the insulin family. In terms of tissue distribution, all the isoforms are expressed in embryos, juvenile and adult liver, muscle and brain. At least one isoform is expressed in heart, kidney, testes, ovary, adipose tissue and spleen of juvenile salmon.

The protein localises to the secreted. Its function is as follows. The insulin-like growth factors, isolated from plasma, are structurally and functionally related to insulin but have a much higher growth-promoting activity. Acts as a ligand for IGF1R. Binds to the alpha subunit of IGF1R, leading to the activation of the intrinsic tyrosine kinase activity which autophosphorylates tyrosine residues in the beta subunit thus initiatiating a cascade of down-stream signaling events leading to activation of the PI3K-AKT/PKB and the Ras-MAPK pathways. Binds to integrins. Its binding to integrins and subsequent ternary complex formation with integrins and IGFR1 are essential for IGF1 signaling. The chain is Insulin-like growth factor 1 from Oncorhynchus kisutch (Coho salmon).